A 458-amino-acid chain; its full sequence is Estrogen-related receptor gamma (458 aa).

A Glycyl lysine isopeptide (Lys-Gly) (interchain with G-Cter in SUMO) cross-link involves residue Lys40. The segment covering 42–52 (EPSSPASLTDS) has biased composition (polar residues). The interval 42–85 (EPSSPASLTDSVNHHSPGGSSDASGSYSSTMNGHQNGLDSPPLY) is disordered. A Phosphoserine modification is found at Ser45. Residues 57 to 70 (SPGGSSDASGSYSS) show a composition bias toward low complexity. Residues 125 to 200 (KRLCLVCGDI…VGMLKEGVRL (76 aa)) constitute a DNA-binding region (nuclear receptor). 2 NR C4-type zinc fingers span residues 128–148 (CLVCGDIASGYHYGVASCEAC) and 164–188 (CPATNECEITKRRRKSCQACRFMKC). Positions 233–457 (PYNKIVSHLL…KLFLEMLEAK (225 aa)) constitute an NR LBD domain.

It belongs to the nuclear hormone receptor family. NR3 subfamily. In terms of assembly, homodimer. Binds TLE1, PNRC1 and PNRC2. Binds GRIP1. Interacts with NRIP1, NCOA1 and NCOR2. In terms of processing, acetylated by PCAF/KAT2 (in vitro). Post-translationally, sumoylation on Lys-40 is enhanced by phosphorylation at Ser-45 and represses transcriptional activity. Phosphorylation on Ser-45 enhances sumoylation on Lys-40 thus repressing transcriptional activity. In terms of tissue distribution, expressed in the heart, kidney, brain, lung, bone marrow, adrenal gland, trachea, spinal cord and thyroid gland.

The protein localises to the nucleus. Orphan receptor that acts as a transcription activator in the absence of bound ligand. Binds specifically to an estrogen response element and activates reporter genes controlled by estrogen response elements. Induces the expression of PERM1 in the skeletal muscle. The protein is Estrogen-related receptor gamma (ESRRG) of Homo sapiens (Human).